Reading from the N-terminus, the 360-residue chain is Photosystem II protein D1 2 (360 aa).

The next 3 membrane-spanning stretches (helical) occupy residues 29–46 (YVGW…TATI), 118–133 (HFLI…EWEL), and 142–156 (WICV…AATA). His-118 is a chlorophyll a binding site. Tyr-126 contacts pheophytin a. 2 residues coordinate [CaMn4O5] cluster: Asp-170 and Glu-189. A helical membrane pass occupies residues 197–218 (FHMLGVAGVFGGSLFSAMHGSL). Chlorophyll a is bound at residue His-198. A quinone is bound by residues His-215 and 264–265 (SF). Position 215 (His-215) interacts with Fe cation. His-272 contacts Fe cation. Residues 274 to 288 (FLAAWPVVGIWFTSL) traverse the membrane as a helical segment. [CaMn4O5] cluster-binding residues include His-332, Glu-333, Asp-342, and Ala-344. Residues 345 to 360 (AGEATPVALTAPAING) constitute a propeptide that is removed on maturation.

The protein belongs to the reaction center PufL/M/PsbA/D family. As to quaternary structure, PSII is composed of 1 copy each of membrane proteins PsbA, PsbB, PsbC, PsbD, PsbE, PsbF, PsbH, PsbI, PsbJ, PsbK, PsbL, PsbM, PsbT, PsbX, PsbY, PsbZ, Psb30/Ycf12, peripheral proteins PsbO, CyanoQ (PsbQ), PsbU, PsbV and a large number of cofactors. It forms dimeric complexes. The cofactor is The D1/D2 heterodimer binds P680, chlorophylls that are the primary electron donor of PSII, and subsequent electron acceptors. It shares a non-heme iron and each subunit binds pheophytin, quinone, additional chlorophylls, carotenoids and lipids. D1 provides most of the ligands for the Mn4-Ca-O5 cluster of the oxygen-evolving complex (OEC). There is also a Cl(-1) ion associated with D1 and D2, which is required for oxygen evolution. The PSII complex binds additional chlorophylls, carotenoids and specific lipids.. Tyr-161 forms a radical intermediate that is referred to as redox-active TyrZ, YZ or Y-Z. In terms of processing, C-terminally processed by CtpA; processing is essential to allow assembly of the oxygen-evolving complex and thus photosynthetic growth.

The protein resides in the cellular thylakoid membrane. It carries out the reaction 2 a plastoquinone + 4 hnu + 2 H2O = 2 a plastoquinol + O2. Photosystem II (PSII) is a light-driven water:plastoquinone oxidoreductase that uses light energy to abstract electrons from H(2)O, generating O(2) and a proton gradient subsequently used for ATP formation. It consists of a core antenna complex that captures photons, and an electron transfer chain that converts photonic excitation into a charge separation. The D1/D2 (PsbA/PsbD) reaction center heterodimer binds P680, the primary electron donor of PSII as well as several subsequent electron acceptors. The sequence is that of Photosystem II protein D1 2 from Synechococcus elongatus (strain ATCC 33912 / PCC 7942 / FACHB-805) (Anacystis nidulans R2).